Here is a 664-residue protein sequence, read N- to C-terminus: SPARC-like protein 1 (664 aa).

A signal peptide spans 1-16; the sequence is MKTGLFFLCLLGTAAA. Residues 25–34 form an O-glycosylated at one additional site region; the sequence is SDHSKPTAET. The interval 28–360 is disordered; it reads SKPTAETVAP…DGPRHSASDD (333 aa). 2 O-linked (GalNAc...) threonine glycosylation sites follow: Thr31 and Thr40. Residue Ser44 is glycosylated (O-linked (GalNAc...) serine). The span at 62–84 shows a compositional bias: basic and acidic residues; it reads DDSHHKAEKSSVLKSKEESHEQS. Ser76, Ser84, and Ser92 each carry phosphoserine. Polar residues predominate over residues 85-94; it reads AEQGKSSSQE. Positions 96–105 are enriched in basic and acidic residues; sequence GLKDQEDSDG. A glycan (O-linked (GalNAc...) threonine) is linked at Thr116. Basic and acidic residues predominate over residues 120 to 136; that stretch reads LDIKEDMSEPQEKKLSE. Positions 146–156 are enriched in polar residues; it reads SSFTDSNQQES. Residue Asn169 is glycosylated (N-linked (GlcNAc...) asparagine). Over residues 170-180 the composition is skewed to basic residues; the sequence is YSHHQLNRSSK. Position 171 is a phosphoserine (Ser171). Asn176 and Asn196 each carry an N-linked (GlcNAc...) asparagine glycan. Residues 188 to 199 show a composition bias toward polar residues; sequence QGNQEQDPNISN. Basic and acidic residues predominate over residues 216-235; it reads DNQERKTELPREHANSKQEE. Acidic residues-rich tracts occupy residues 236–248 and 259–280; these read DNTQ…EESD and DEFD…EEEN. A Phosphoserine modification is found at Ser272. Asn280 carries an N-linked (GlcNAc...) asparagine glycan. Positions 306 to 316 are enriched in basic and acidic residues; sequence SNHKETEEKTV. A glycan (O-linked (GalNAc...) threonine) is linked at Thr331. The segment covering 339–349 has biased composition (acidic residues); it reads DDGDDDGDDGG. Phosphoserine occurs at positions 358 and 365. The interval 388–426 is disordered; sequence EKVHENENIGTTEPGEHQEAKKAENSSNEEETSSEGNMR. Residue Thr398 is glycosylated (O-linked (GalNAc...) threonine). A compositionally biased stretch (basic and acidic residues) spans 401-411; sequence PGEHQEAKKAE. N-linked (GlcNAc...) asparagine glycosylation occurs at Asn412. Residue Ser420 is modified to Phosphoserine. In terms of domain architecture, Follistatin-like spans 432–454; sequence SCMSFQCKRGHICKADQQGKPHC. Cystine bridges form between Cys433–Cys444, Cys438–Cys454, Cys456–Cys490, Cys462–Cys483, Cys472–Cys509, Cys515–Cys626, and Cys634–Cys650. A Kazal-like domain is found at 450-511; the sequence is GKPHCVCQDP…QLDYFGACKS (62 aa). Asn476 is a glycosylation site (N-linked (GlcNAc...) asparagine). One can recognise an EF-hand domain in the interval 622-657; it reads PMEHCITRFFEECDPNKDKHITLKEWGHCFGIKEED. Asp635, Asn637, Asp639, His641, and Glu646 together coordinate Ca(2+).

It belongs to the SPARC family. In terms of processing, N- and O-glycosylated. O-glycosylated with a core 1 or possibly core 8 glycan. As to expression, highly expressed in lymph node, brain, heart, lung, skeletal muscle, ovary, small intestine, and colon, with lower levels in placenta, pancreas, testis, spleen, and thymus, and no expression in kidney, liver, and peripheral blood leukocytes.

It localises to the secreted. It is found in the extracellular space. The protein localises to the extracellular matrix. This chain is SPARC-like protein 1 (SPARCL1), found in Homo sapiens (Human).